A 255-amino-acid chain; its full sequence is MLFDTHAHLNAEQYDTDLEEVIERAKAEKVERIVVVGFDRPTITRAMEMIEEYDFIYAAIGWHPVDAIDMTEEDLAWIKELSAHEKVVAIGEMGLDYHWDKSPKDIQKEVFRNQIALAKEVNLPIIIHNRDATEDVVTILKEEGAEAVGGIMHCFTGSAEVARECMKMNFYLSFGGPVTFKNAKKPKEVVKEIPNDRLLIETDCPFLTPHPFRGKRNEPSYVKYVAEQIAELKEMTFEEIASITTENAKRLFRIN.

A divalent metal cation-binding residues include histidine 6, histidine 8, glutamate 92, histidine 128, histidine 153, and aspartate 203.

Belongs to the metallo-dependent hydrolases superfamily. TatD-type hydrolase family. A divalent metal cation serves as cofactor.

This is an uncharacterized protein from Bacillus subtilis (strain 168).